We begin with the raw amino-acid sequence, 251 residues long: Cell division protein ZapD (251 aa).

Belongs to the ZapD family. In terms of assembly, interacts with FtsZ.

The protein localises to the cytoplasm. Its function is as follows. Cell division factor that enhances FtsZ-ring assembly. Directly interacts with FtsZ and promotes bundling of FtsZ protofilaments, with a reduction in FtsZ GTPase activity. The polypeptide is Cell division protein ZapD (Burkholderia ambifaria (strain MC40-6)).